The chain runs to 222 residues: 7-cyano-7-deazaguanine synthase (222 aa).

11-21 (LSGGMDSAVLL) contributes to the ATP binding site. Zn(2+) is bound by residues Cys192, Cys200, Cys203, and Cys206.

It belongs to the QueC family. Zn(2+) serves as cofactor.

It catalyses the reaction 7-carboxy-7-deazaguanine + NH4(+) + ATP = 7-cyano-7-deazaguanine + ADP + phosphate + H2O + H(+). Its pathway is purine metabolism; 7-cyano-7-deazaguanine biosynthesis. Its function is as follows. Catalyzes the ATP-dependent conversion of 7-carboxy-7-deazaguanine (CDG) to 7-cyano-7-deazaguanine (preQ(0)). The protein is 7-cyano-7-deazaguanine synthase of Sulfurihydrogenibium sp. (strain YO3AOP1).